The sequence spans 327 residues: Probable cell division protein WhiA (327 aa).

Positions 275–308 (SLEELGRLADPPMTKDAVAGRIRRLLSMADRKAK) form a DNA-binding region, H-T-H motif.

Belongs to the WhiA family.

Involved in cell division and chromosome segregation. This chain is Probable cell division protein WhiA, found in Mycobacterium marinum (strain ATCC BAA-535 / M).